We begin with the raw amino-acid sequence, 3303 residues long: Protein unc-80 homolog (3303 aa).

Over residues 1-37 (MVTNAAGTAATGGATSNTTNNNNLQTNNNSHGANNNN) the composition is skewed to low complexity. Positions 1–43 (MVTNAAGTAATGGATSNTTNNNNLQTNNNSHGANNNNDDFDFD) are disordered. Residues 202–222 (LFSVPTITLFVYLFAPIIHHL) form a helical membrane-spanning segment. Disordered stretches follow at residues 284–316 (LSAD…VSSP), 361–422 (LQQQ…SESI), 491–512 (LYQG…KDYI), 526–546 (AEEP…KKKR), 1036–1067 (FRRR…SERN), 1443–1563 (LHEP…DDTA), and 1627–1671 (VEPT…KDRI). Over residues 361–377 (LQQQQSQSRRGSRQSMN) the composition is skewed to low complexity. 2 stretches are compositionally biased toward basic and acidic residues: residues 378–391 (SRDK…KFEF) and 401–422 (SMKE…SESI). Residues 495–505 (PGSNSRDSPGS) are compositionally biased toward polar residues. The segment covering 1058-1067 (SDSTSSSERN) has biased composition (polar residues). The span at 1490–1499 (FKRRSLKLRR) shows a compositional bias: basic residues. A compositionally biased stretch (polar residues) spans 1546-1556 (DDQQPESPTDS). The segment covering 1660-1671 (KRKDSLSRKDRI) has biased composition (basic and acidic residues). A run of 3 helical transmembrane segments spans residues 1969-1989 (VYEI…ALFL), 2018-2038 (LPQQ…MFYV), and 2048-2068 (LVGS…GIMF). Disordered stretches follow at residues 2518–2550 (NGPY…FEEE), 3003–3158 (EEKR…FKAQ), and 3170–3262 (FRHS…YRDN). Residues 3003–3018 (EEKRYDRESSEQKKSD) are compositionally biased toward basic and acidic residues. Polar residues-rich tracts occupy residues 3033 to 3053 (QRPS…SHSH) and 3071 to 3106 (PSDT…SQSG). Residues 3124–3134 (SGHGSGGGIGT) are compositionally biased toward gly residues. Low complexity predominate over residues 3135–3152 (GAASAVPSHLSHSQSLQQ). Residues 3198–3217 (SRLQRSKAASRKTFRLKRSR) are compositionally biased toward basic residues. Over residues 3226–3239 (IVTSQEEQAPQAQA) the composition is skewed to polar residues. The span at 3246 to 3257 (SWDSVSQTSSTS) shows a compositional bias: low complexity.

The protein belongs to the unc-80 family. As to quaternary structure, interacts with unc79 and na. Can interact with unc79 independently of na.

The protein localises to the membrane. Functionally, component of the na (narrow abdomen) sodium channel complex. In the circadian clock neurons it functions with na and unc79 to promote circadian rhythmicity. This is Protein unc-80 homolog from Drosophila melanogaster (Fruit fly).